Consider the following 529-residue polypeptide: Bifunctional purine biosynthesis protein PurH (529 aa).

Positions 2 to 149 (TDLHPVRRAL…KNHAFVNVVV (148 aa)) constitute an MGS-like domain.

The protein belongs to the PurH family.

The catalysed reaction is (6R)-10-formyltetrahydrofolate + 5-amino-1-(5-phospho-beta-D-ribosyl)imidazole-4-carboxamide = 5-formamido-1-(5-phospho-D-ribosyl)imidazole-4-carboxamide + (6S)-5,6,7,8-tetrahydrofolate. It catalyses the reaction IMP + H2O = 5-formamido-1-(5-phospho-D-ribosyl)imidazole-4-carboxamide. The protein operates within purine metabolism; IMP biosynthesis via de novo pathway; 5-formamido-1-(5-phospho-D-ribosyl)imidazole-4-carboxamide from 5-amino-1-(5-phospho-D-ribosyl)imidazole-4-carboxamide (10-formyl THF route): step 1/1. It participates in purine metabolism; IMP biosynthesis via de novo pathway; IMP from 5-formamido-1-(5-phospho-D-ribosyl)imidazole-4-carboxamide: step 1/1. In Ruegeria sp. (strain TM1040) (Silicibacter sp.), this protein is Bifunctional purine biosynthesis protein PurH.